Reading from the N-terminus, the 438-residue chain is Protein DJ-1 homolog B (438 aa).

A chloroplast-targeting transit peptide spans 1–45 (MASSSLCHRYFNKITVTPFFNTKKLHHYSPRRISLRVNRRSFSIS). PfpI endopeptidase domains are found at residues 53 to 220 (KKVL…EQLL) and 258 to 424 (PQIL…EKFY).

It belongs to the peptidase C56 family. Homodimer.

The protein localises to the plastid. It is found in the chloroplast. In terms of biological role, may be involved in oxidative stress response. This chain is Protein DJ-1 homolog B (DJ1B), found in Arabidopsis thaliana (Mouse-ear cress).